Reading from the N-terminus, the 175-residue chain is Diacylglycerol kinase (175 aa).

Helical transmembrane passes span 55–75 and 96–116; these read VAPNLLVSFRYAWAGVSYAFA and LLHLEAIAVAVLALTSCLVMI. Residue E118 is the Proton acceptor of the active site. E125 is an a divalent metal cation binding site. Residues 151–171 traverse the membrane as a helical segment; that stretch reads VLLAAIAAVIVGGCLLLPPLL.

It belongs to the bacterial diacylglycerol kinase family. Mg(2+) is required as a cofactor.

The protein localises to the cell membrane. The enzyme catalyses a 1,2-diacyl-sn-glycerol + ATP = a 1,2-diacyl-sn-glycero-3-phosphate + ADP + H(+). Functionally, catalyzes the ATP-dependent phosphorylation of sn-l,2-diacylglycerol (DAG) to phosphatidic acid. The polypeptide is Diacylglycerol kinase (dgkA) (Synechocystis sp. (strain ATCC 27184 / PCC 6803 / Kazusa)).